The sequence spans 74 residues: NAD(P)H-quinone oxidoreductase subunit O (74 aa).

Belongs to the complex I NdhO subunit family. In terms of assembly, NDH-1 can be composed of about 15 different subunits; different subcomplexes with different compositions have been identified which probably have different functions.

It is found in the cellular thylakoid membrane. The enzyme catalyses a plastoquinone + NADH + (n+1) H(+)(in) = a plastoquinol + NAD(+) + n H(+)(out). It carries out the reaction a plastoquinone + NADPH + (n+1) H(+)(in) = a plastoquinol + NADP(+) + n H(+)(out). Functionally, NDH-1 shuttles electrons from an unknown electron donor, via FMN and iron-sulfur (Fe-S) centers, to quinones in the respiratory and/or the photosynthetic chain. The immediate electron acceptor for the enzyme in this species is believed to be plastoquinone. Couples the redox reaction to proton translocation, and thus conserves the redox energy in a proton gradient. Cyanobacterial NDH-1 also plays a role in inorganic carbon-concentration. The polypeptide is NAD(P)H-quinone oxidoreductase subunit O (Synechococcus sp. (strain RCC307)).